Reading from the N-terminus, the 71-residue chain is Small, acid-soluble spore protein 2 (71 aa).

This sequence belongs to the alpha/beta-type SASP family.

Its function is as follows. SASP are bound to spore DNA. They are double-stranded DNA-binding proteins that cause DNA to change to an a-like conformation. They protect the DNA backbone from chemical and enzymatic cleavage and are thus involved in dormant spore's high resistance to UV light. This is Small, acid-soluble spore protein 2 from Bacillus subtilis.